The following is a 511-amino-acid chain: Histidine ammonia-lyase (511 aa).

The 5-imidazolinone (Ala-Gly) cross-link spans 142-144 (ASG). At Ser143 the chain carries 2,3-didehydroalanine (Ser).

The protein belongs to the PAL/histidase family. Post-translationally, contains an active site 4-methylidene-imidazol-5-one (MIO), which is formed autocatalytically by cyclization and dehydration of residues Ala-Ser-Gly.

The protein localises to the cytoplasm. The enzyme catalyses L-histidine = trans-urocanate + NH4(+). The protein operates within amino-acid degradation; L-histidine degradation into L-glutamate; N-formimidoyl-L-glutamate from L-histidine: step 1/3. This is Histidine ammonia-lyase from Brucella abortus (strain S19).